Here is a 642-residue protein sequence, read N- to C-terminus: Chaperone protein DnaK (642 aa).

T199 is modified (phosphothreonine; by autocatalysis). The segment covering 570–585 has biased composition (basic and acidic residues); sequence EELEQASKDGDKEAID. Residues 570-642 form a disordered region; it reads EELEQASKDG…FEEVKDDDKK (73 aa). Positions 600–620 are enriched in low complexity; it reads EAAQQQQAQQGAEGAAGGEQQ. A compositionally biased stretch (acidic residues) spans 627 to 642; sequence DVVDAEFEEVKDDDKK.

It belongs to the heat shock protein 70 family.

In terms of biological role, acts as a chaperone. This Idiomarina loihiensis (strain ATCC BAA-735 / DSM 15497 / L2-TR) protein is Chaperone protein DnaK.